Reading from the N-terminus, the 160-residue chain is Crossover junction endodeoxyribonuclease RuvC (160 aa).

Residues Asp9, Glu68, and Asp141 contribute to the active site. Residues Asp9, Glu68, and Asp141 each contribute to the Mg(2+) site.

It belongs to the RuvC family. In terms of assembly, homodimer which binds Holliday junction (HJ) DNA. The HJ becomes 2-fold symmetrical on binding to RuvC with unstacked arms; it has a different conformation from HJ DNA in complex with RuvA. In the full resolvosome a probable DNA-RuvA(4)-RuvB(12)-RuvC(2) complex forms which resolves the HJ. Requires Mg(2+) as cofactor.

It is found in the cytoplasm. The enzyme catalyses Endonucleolytic cleavage at a junction such as a reciprocal single-stranded crossover between two homologous DNA duplexes (Holliday junction).. In terms of biological role, the RuvA-RuvB-RuvC complex processes Holliday junction (HJ) DNA during genetic recombination and DNA repair. Endonuclease that resolves HJ intermediates. Cleaves cruciform DNA by making single-stranded nicks across the HJ at symmetrical positions within the homologous arms, yielding a 5'-phosphate and a 3'-hydroxyl group; requires a central core of homology in the junction. The consensus cleavage sequence is 5'-(A/T)TT(C/G)-3'. Cleavage occurs on the 3'-side of the TT dinucleotide at the point of strand exchange. HJ branch migration catalyzed by RuvA-RuvB allows RuvC to scan DNA until it finds its consensus sequence, where it cleaves and resolves the cruciform DNA. This is Crossover junction endodeoxyribonuclease RuvC from Campylobacter jejuni (strain RM1221).